Here is a 1122-residue protein sequence, read N- to C-terminus: Midnolin homolog (1122 aa).

Positions 69–143 constitute a Ubiquitin-like domain; the sequence is INLNISTTTG…IILIPNVETG (75 aa). The segment at 210-300 is required for interaction with Pc; that stretch reads GGASGSSINA…SGQRSSGRIG (91 aa). Disordered regions lie at residues 257-399, 596-630, 645-677, 746-775, 840-876, 886-905, 922-955, and 1067-1122; these read VGGS…STLN, KHRH…HFFN, FATS…GAGA, GVVS…KSGS, APTT…RSKM, KCNS…ASGS, AATK…NGCT, and AAPA…DTAA. A compositionally biased stretch (low complexity) spans 266-298; sequence SGTSSSSSSTSSSSSSSSSSSRTRSSGQRSSGR. 2 stretches are compositionally biased toward basic residues: residues 300–310 and 321–352; these read GHGHVHSHQHP and SHGH…HHHN. Low complexity predominate over residues 375-397; sequence PSSSGASGSAPATGTGQSQSSST. Basic residues predominate over residues 596-610; sequence KHRHYHGQGHGHGHG. Low complexity-rich tracts occupy residues 612–627, 648–663, 746–766, 856–867, 889–903, and 922–936; these read GHSS…SSSH, SSSS…SSSP, GVVS…AASG, SGSSSTTSSGSG, SRAQ…TLAS, and AATK…SSHS. Polar residues-rich tracts occupy residues 937–954 and 1071–1085; these read CCQT…SNGC and NSIT…VNGN. Low complexity predominate over residues 1086–1107; it reads TSTAPATAATSAAAAPTAAPPS.

In terms of assembly, interacts with PRC1 complex member polycomb protein Pc; the interaction targets Pc for ubiquitin-independent proteasomal degradation. Does not interact with PRC1 members Ph, Psc or Sce so does not appear to be a member of the PRC1 complex. Interacts with 26S proteasome regulatory subunit Rpn10.

The protein resides in the nucleus. Functionally, facilitates ubiquitin-independent proteasomal degradation of polycomb protein Pc by interacting directly with the proteasome and recruiting Pc to it. This Drosophila melanogaster (Fruit fly) protein is Midnolin homolog.